The primary structure comprises 153 residues: MEQSELMVRRIKEGTVIDHIDEGKGIQVLNALRIDGSDGSLITIALNVPSGKFKKKDIIKVENKFLKDDDTNKLAVIAPKATINMIKDYKLVEKRRVSLPNEIDRIFRCSNPDCVTNSTEHIESIMDVIDKEGRVLKCRYCSRVLDVNQLKYN.

4 residues coordinate Zn(2+): Cys109, Cys114, Cys138, and Cys141.

It belongs to the PyrI family. In terms of assembly, contains catalytic and regulatory chains. The cofactor is Zn(2+).

Its function is as follows. Involved in allosteric regulation of aspartate carbamoyltransferase. This is Aspartate carbamoyltransferase regulatory chain from Nitrosopumilus maritimus (strain SCM1).